The primary structure comprises 276 residues: Inositol-1-monophosphatase ImpA (276 aa).

Mg(2+) is bound by residues Glu74, Asp90, Ile92, and Asp93. Position 74 (Glu74) interacts with substrate. Substrate-binding positions include 92 to 95, Arg192, and Asp221; that span reads IDGT. Asp221 is a Mg(2+) binding site.

Belongs to the inositol monophosphatase superfamily. The cofactor is Mg(2+).

It carries out the reaction a myo-inositol phosphate + H2O = myo-inositol + phosphate. The protein operates within polyol metabolism; myo-inositol biosynthesis; myo-inositol from D-glucose 6-phosphate: step 2/2. Its function is as follows. Catalyzes the dephosphorylation of inositol 1-phosphate (I-1-P) to yield free myo-inositol, a key metabolite in mycobacteria. This Mycolicibacterium smegmatis (strain ATCC 700084 / mc(2)155) (Mycobacterium smegmatis) protein is Inositol-1-monophosphatase ImpA (impA).